A 208-amino-acid polypeptide reads, in one-letter code: Sodium/potassium-transporting ATPase subunit beta-1-interacting protein 2 (208 aa).

Transmembrane regions (helical) follow at residues 1–23, 35–55, 64–84, and 148–168; these read MGYCSGRCTLIFICGMQLVCVLE, APILANFVHIIIVILGLFGTI, GYAVWLVLWVTWNVFVICFYL, and VAHSSLQIVLALAGFIYACYV.

It belongs to the NKAIN family. Interacts with ATP1B1. As to expression, detected in the brain only and specifically in neurons; expressed in multiple regions such as cerebral cortex, thalamus, cerebellum, olfactory bulb and brainstem, but not in the hippocampus.

The protein localises to the cell membrane. The protein is Sodium/potassium-transporting ATPase subunit beta-1-interacting protein 2 (Nkain2) of Mus musculus (Mouse).